We begin with the raw amino-acid sequence, 204 residues long: UPF0637 protein lwe1043 (204 aa).

This sequence belongs to the UPF0637 family.

The protein is UPF0637 protein lwe1043 of Listeria welshimeri serovar 6b (strain ATCC 35897 / DSM 20650 / CCUG 15529 / CIP 8149 / NCTC 11857 / SLCC 5334 / V8).